The following is a 156-amino-acid chain: Cyanate hydratase (156 aa).

Residues R96, E99, and S122 contribute to the active site.

This sequence belongs to the cyanase family.

The catalysed reaction is cyanate + hydrogencarbonate + 3 H(+) = NH4(+) + 2 CO2. In terms of biological role, catalyzes the reaction of cyanate with bicarbonate to produce ammonia and carbon dioxide. In Burkholderia ambifaria (strain MC40-6), this protein is Cyanate hydratase.